A 387-amino-acid chain; its full sequence is 8-amino-7-oxononanoate synthase (387 aa).

Residue arginine 19 participates in substrate binding. 106 to 107 contributes to the pyridoxal 5'-phosphate binding site; that stretch reads GY. Substrate is bound at residue histidine 131. Residues serine 177, histidine 205, and threonine 236 each coordinate pyridoxal 5'-phosphate. At lysine 239 the chain carries N6-(pyridoxal phosphate)lysine. Threonine 353 contributes to the substrate binding site.

This sequence belongs to the class-II pyridoxal-phosphate-dependent aminotransferase family. BioF subfamily. Homodimer. Pyridoxal 5'-phosphate is required as a cofactor.

It carries out the reaction 6-carboxyhexanoyl-[ACP] + L-alanine + H(+) = (8S)-8-amino-7-oxononanoate + holo-[ACP] + CO2. The protein operates within cofactor biosynthesis; biotin biosynthesis. Catalyzes the decarboxylative condensation of pimeloyl-[acyl-carrier protein] and L-alanine to produce 8-amino-7-oxononanoate (AON), [acyl-carrier protein], and carbon dioxide. The sequence is that of 8-amino-7-oxononanoate synthase from Nitrosomonas europaea (strain ATCC 19718 / CIP 103999 / KCTC 2705 / NBRC 14298).